The primary structure comprises 379 residues: NuA4 complex subunit EAF3 homolog (379 aa).

The 56-residue stretch at Glu6–Ile61 folds into the Tudor-knot domain. Residues Thr75 to Phe212 are disordered. Residues Lys78–Lys87 are compositionally biased toward low complexity. Residues Glu111–Glu141 show a composition bias toward acidic residues. The span at Ser165–Asn199 shows a compositional bias: low complexity. One can recognise an MRG domain in the interval Ser214 to Ser377.

In terms of assembly, component of the NuA4 histone acetyltransferase complex.

It is found in the nucleus. In terms of biological role, component of the NuA4 histone acetyltransferase complex which is involved in transcriptional activation of selected genes principally by acetylation of nucleosomal histone H4 and H2A. The NuA4 complex is also involved in DNA repair. Also a component of a complex which acts to repress transcription by deacetylation of nucleosomal histones. The chain is NuA4 complex subunit EAF3 homolog from Dictyostelium discoideum (Social amoeba).